A 132-amino-acid polypeptide reads, in one-letter code: Large-conductance mechanosensitive channel (132 aa).

Transmembrane regions (helical) follow at residues 14 to 34 (VVDLAVGVVIGAAFGKIVSSL), 38 to 58 (IITPLLGMVLGGVDFTSLHFG), and 67 to 87 (GNFIQTIFDFLIIAASIFMFV).

It belongs to the MscL family. Homopentamer.

The protein localises to the cell membrane. Its function is as follows. Channel that opens in response to stretch forces in the membrane lipid bilayer. May participate in the regulation of osmotic pressure changes within the cell. The sequence is that of Large-conductance mechanosensitive channel from Bacillus cereus (strain B4264).